Reading from the N-terminus, the 86-residue chain is Mitochondrial import inner membrane translocase subunit Tim10 (86 aa).

The Twin CX3C motif signature appears at 29–54 (CQAKCIATAFRESELTKGEAVCLDRC). 2 disulfide bridges follow: C29–C54 and C33–C50.

It belongs to the small Tim family. In terms of assembly, heterohexamer; composed of 3 copies of tim-9/tin-9.1 and 3 copies of tim-10/tin-10, named soluble 70 kDa complex. The complex associates with the tim-22 component of the TIM22 complex. Interacts with multi-pass transmembrane proteins in transit.

It localises to the mitochondrion inner membrane. Mitochondrial intermembrane chaperone that participates in the import and insertion of multi-pass transmembrane proteins into the mitochondrial inner membrane. May also be required for the transfer of beta-barrel precursors from the TOM complex to the sorting and assembly machinery (SAM complex) of the outer membrane. Acts as a chaperone-like protein that protects the hydrophobic precursors from aggregation and guide them through the mitochondrial intermembrane space. This Caenorhabditis elegans protein is Mitochondrial import inner membrane translocase subunit Tim10 (tin-10).